Here is a 473-residue protein sequence, read N- to C-terminus: MLEQVQKFLLSRAACQGSDSQSRYEELFHKLDVNKDGKVDILELQEGLKAMGMEVGKGAEEKIVAAGDTNKDGHLDFGEFIRYLEEHEKKMKIAFTSLDKNKDGKIESAEIMNSLKVLGIKISLDHADKILKSMDSDGTLTVDWNEWRDHFLFNPADNIQQIIRYWKHSTVLDIGDSLTIPDEFTEEEKKTGQWWKQLMAGGMAGAVSRTGTAPLDRLKVMMQVHGSKGNSNIITGLKQMVKEGGIRSLWRGNGVNVIKIAPETAMKFWAYEQYKKLFTSESGKLGTAERFVAGSLAGATAQTSIYPMEVLKTRLAVGRTGQYSGMFDCAKKIMQKEGIRAFYKGYIPNILGIIPYAGIDLAIYETLKNYWLQNHAKDSANPGVLVLLGCGTASSTCGQLASYPLALIRTRMQAQASIEGAPQLNMGGLFRKIVAKEGFLGLYRGIGPNFLKVLPAVSISYVVYEKMKVQLGI.

The interval 1–173 (MLEQVQKFLL…RYWKHSTVLD (173 aa)) is regulatory N-terminal domain. The Mitochondrial intermembrane segment spans residues 1-197 (MLEQVQKFLL…EKKTGQWWKQ (197 aa)). EF-hand domains lie at 19–54 (DSQS…MGME), 55–88 (VGKG…EEHE), 86–121 (EHEK…LGIK), and 122–157 (ISLD…NPAD). Residues Asp-32, Asn-34, Asp-36, Lys-38, Glu-43, Asp-68, Asn-70, Asp-72, His-74, Glu-79, Asp-99, Asn-101, Asp-103, Lys-105, Glu-110, Asp-135, Asp-137, Thr-139, Thr-141, and Glu-146 each contribute to the Ca(2+) site. The interval 159-168 (IQQIIRYWKH) is linker region. The tract at residues 174–473 (IGDSLTIPDE…YEKMKVQLGI (300 aa)) is C-terminal transmembrane transporter domain. 3 Solcar repeats span residues 192–277 (GQWW…YKKL), 285–370 (LGTA…LKNY), and 382–470 (PGVL…MKVQ). The helical transmembrane segment at 198-215 (LMAGGMAGAVSRTGTAPL) threads the bilayer. Residues 216–251 (DRLKVMMQVHGSKGNSNIITGLKQMVKEGGIRSLWR) are Mitochondrial matrix-facing. A helical membrane pass occupies residues 252–271 (GNGVNVIKIAPETAMKFWAY). Over 272–294 (EQYKKLFTSESGKLGTAERFVAG) the chain is Mitochondrial intermembrane. The helical transmembrane segment at 295-308 (SLAGATAQTSIYPM) threads the bilayer. At 309-344 (EVLKTRLAVGRTGQYSGMFDCAKKIMQKEGIRAFYK) the chain is on the mitochondrial matrix side. The chain crosses the membrane as a helical span at residues 345-364 (GYIPNILGIIPYAGIDLAIY). At 365-387 (ETLKNYWLQNHAKDSANPGVLVL) the chain is on the mitochondrial intermembrane side. The chain crosses the membrane as a helical span at residues 388–405 (LGCGTASSTCGQLASYPL). Residues 406–444 (ALIRTRMQAQASIEGAPQLNMGGLFRKIVAKEGFLGLYR) lie on the Mitochondrial matrix side of the membrane. A helical membrane pass occupies residues 445–464 (GIGPNFLKVLPAVSISYVVY). Residues 465–473 (EKMKVQLGI) are Mitochondrial intermembrane-facing.

It belongs to the mitochondrial carrier (TC 2.A.29) family. In terms of assembly, monomer.

Its subcellular location is the mitochondrion inner membrane. The enzyme catalyses Mg(2+)(out) + phosphate(in) + ATP(out) = Mg(2+)(in) + phosphate(out) + ATP(in). It carries out the reaction ADP(out) + phosphate(in) + H(+)(out) = ADP(in) + phosphate(out) + H(+)(in). The catalysed reaction is AMP(out) + phosphate(in) = AMP(in) + phosphate(out). It catalyses the reaction phosphate(in) + ATP(out) + 2 H(+)(out) = phosphate(out) + ATP(in) + 2 H(+)(in). The enzyme catalyses dADP(in) + ADP(out) = dADP(out) + ADP(in). It carries out the reaction Mg(2+)(in) + ADP(out) + ATP(in) + H(+)(out) = Mg(2+)(out) + ADP(in) + ATP(out) + H(+)(in). The catalysed reaction is ADP(out) + diphosphate(in) = ADP(in) + diphosphate(out). It catalyses the reaction dAMP(in) + ADP(out) + H(+)(out) = dAMP(out) + ADP(in) + H(+)(in). The enzyme catalyses 3'-AMP(in) + ADP(out) + H(+)(out) = 3'-AMP(out) + ADP(in) + H(+)(in). It carries out the reaction dAMP(out) + phosphate(in) = dAMP(in) + phosphate(out). The catalysed reaction is 3'-AMP(out) + phosphate(in) = 3'-AMP(in) + phosphate(out). It catalyses the reaction dADP(out) + phosphate(in) + H(+)(out) = dADP(in) + phosphate(out) + H(+)(in). Activated by an increase in cytosolic calcium levels that induce a conformational change of the N-terminal regulatory domain, uncapping the channel and allowing transport. Inhibited by bathophenanthroline, mersalyl, p-hydroxymercuribenzoate, bromcresol purple and tannic acid. Functionally, electroneutral antiporter that mediates the transport of adenyl nucleotides through the inner mitochondrial membrane. Originally identified as an ATP-magnesium/inorganic phosphate antiporter, it also acts as a broad specificity adenyl nucleotide antiporter. By regulating the mitochondrial matrix adenyl nucleotide pool could adapt to changing cellular energetic demands and indirectly regulate adenyl nucleotide-dependent metabolic pathways. The protein is Mitochondrial adenyl nucleotide antiporter SLC25A24-B (slc25a24-b) of Xenopus laevis (African clawed frog).